A 142-amino-acid chain; its full sequence is Large ribosomal subunit protein uL13 (142 aa).

Belongs to the universal ribosomal protein uL13 family. As to quaternary structure, part of the 50S ribosomal subunit.

This protein is one of the early assembly proteins of the 50S ribosomal subunit, although it is not seen to bind rRNA by itself. It is important during the early stages of 50S assembly. In Aromatoleum aromaticum (strain DSM 19018 / LMG 30748 / EbN1) (Azoarcus sp. (strain EbN1)), this protein is Large ribosomal subunit protein uL13.